A 98-amino-acid polypeptide reads, in one-letter code: NADH-ubiquinone oxidoreductase chain 4L (98 aa).

The next 3 helical transmembrane spans lie at 1 to 21 (MVLI…GVLI), 36 to 56 (MMLS…MFSI), and 61 to 81 (LILL…LVTI).

This sequence belongs to the complex I subunit 4L family. As to quaternary structure, core subunit of respiratory chain NADH dehydrogenase (Complex I) which is composed of 45 different subunits.

The protein localises to the mitochondrion inner membrane. The enzyme catalyses a ubiquinone + NADH + 5 H(+)(in) = a ubiquinol + NAD(+) + 4 H(+)(out). Core subunit of the mitochondrial membrane respiratory chain NADH dehydrogenase (Complex I) which catalyzes electron transfer from NADH through the respiratory chain, using ubiquinone as an electron acceptor. Part of the enzyme membrane arm which is embedded in the lipid bilayer and involved in proton translocation. The chain is NADH-ubiquinone oxidoreductase chain 4L (MT-ND4L) from Metachirus nudicaudatus (Brown four-eyed opossum).